A 157-amino-acid polypeptide reads, in one-letter code: 6,7-dimethyl-8-ribityllumazine synthase 1 (157 aa).

5-amino-6-(D-ribitylamino)uracil contacts are provided by residues phenylalanine 22, 53 to 55, and 82 to 84; these read ALE and TVI. Residue 87–88 participates in (2S)-2-hydroxy-3-oxobutyl phosphate binding; the sequence is ET. Histidine 90 acts as the Proton donor in catalysis. Asparagine 115 is a 5-amino-6-(D-ribitylamino)uracil binding site. Arginine 129 provides a ligand contact to (2S)-2-hydroxy-3-oxobutyl phosphate.

It belongs to the DMRL synthase family. Homopentamer.

It catalyses the reaction (2S)-2-hydroxy-3-oxobutyl phosphate + 5-amino-6-(D-ribitylamino)uracil = 6,7-dimethyl-8-(1-D-ribityl)lumazine + phosphate + 2 H2O + H(+). It functions in the pathway cofactor biosynthesis; riboflavin biosynthesis; riboflavin from 2-hydroxy-3-oxobutyl phosphate and 5-amino-6-(D-ribitylamino)uracil: step 1/2. Catalyzes the formation of 6,7-dimethyl-8-ribityllumazine by condensation of 5-amino-6-(D-ribitylamino)uracil with 3,4-dihydroxy-2-butanone 4-phosphate. This is the penultimate step in the biosynthesis of riboflavin. The protein is 6,7-dimethyl-8-ribityllumazine synthase 1 (ribH1) of Brucella melitensis biotype 1 (strain ATCC 23456 / CCUG 17765 / NCTC 10094 / 16M).